The sequence spans 370 residues: GDSL esterase/lipase At1g33811 (370 aa).

The signal sequence occupies residues 1–24; the sequence is MGILRFVLLISLNLVLFGFKTTVS. The active-site Nucleophile is Ser41. Residues Asn203, Asn241, and Asn242 are each glycosylated (N-linked (GlcNAc...) asparagine). Catalysis depends on residues Asp336 and His339.

Belongs to the 'GDSL' lipolytic enzyme family.

It localises to the secreted. The protein is GDSL esterase/lipase At1g33811 of Arabidopsis thaliana (Mouse-ear cress).